A 119-amino-acid chain; its full sequence is Large ribosomal subunit protein bL20 (119 aa).

It belongs to the bacterial ribosomal protein bL20 family.

In terms of biological role, binds directly to 23S ribosomal RNA and is necessary for the in vitro assembly process of the 50S ribosomal subunit. It is not involved in the protein synthesizing functions of that subunit. The sequence is that of Large ribosomal subunit protein bL20 from Xylella fastidiosa (strain M12).